A 728-amino-acid chain; its full sequence is Catalase-peroxidase 1 (728 aa).

Residues 91-218 (WHSAGTYRTA…LAAVQMGLIY (128 aa)) constitute a cross-link (tryptophyl-tyrosyl-methioninium (Trp-Tyr) (with M-244)). The Proton acceptor role is filled by histidine 92. A cross-link (tryptophyl-tyrosyl-methioninium (Tyr-Met) (with W-91)) is located at residues 218-244 (YVNPEGPDGNPDPVAAAHDIRETFARM). Histidine 259 contacts heme b.

The protein belongs to the peroxidase family. Peroxidase/catalase subfamily. Homodimer or homotetramer. Heme b is required as a cofactor. Formation of the three residue Trp-Tyr-Met cross-link is important for the catalase, but not the peroxidase activity of the enzyme.

The enzyme catalyses H2O2 + AH2 = A + 2 H2O. It carries out the reaction 2 H2O2 = O2 + 2 H2O. Bifunctional enzyme with both catalase and broad-spectrum peroxidase activity. This chain is Catalase-peroxidase 1, found in Burkholderia orbicola (strain MC0-3).